Consider the following 160-residue polypeptide: Cytochrome b6-f complex subunit 4 (160 aa).

Transmembrane regions (helical) follow at residues 36–56 (LLYI…GLSV), 95–115 (LLGV…PFIE), and 131–151 (TVFL…TFPI).

The protein belongs to the cytochrome b family. PetD subfamily. In terms of assembly, the 4 large subunits of the cytochrome b6-f complex are cytochrome b6, subunit IV (17 kDa polypeptide, petD), cytochrome f and the Rieske protein, while the 4 small subunits are petG, petL, petM and petN. The complex functions as a dimer.

The protein localises to the plastid. It localises to the chloroplast thylakoid membrane. Its function is as follows. Component of the cytochrome b6-f complex, which mediates electron transfer between photosystem II (PSII) and photosystem I (PSI), cyclic electron flow around PSI, and state transitions. The polypeptide is Cytochrome b6-f complex subunit 4 (Stigeoclonium helveticum (Green alga)).